Reading from the N-terminus, the 247-residue chain is Uracil-DNA glycosylase (247 aa).

D83 serves as the catalytic Proton acceptor.

The protein belongs to the uracil-DNA glycosylase (UDG) superfamily. UNG family.

The protein localises to the cytoplasm. The enzyme catalyses Hydrolyzes single-stranded DNA or mismatched double-stranded DNA and polynucleotides, releasing free uracil.. Its function is as follows. Excises uracil residues from the DNA which can arise as a result of misincorporation of dUMP residues by DNA polymerase or due to deamination of cytosine. In Deinococcus radiodurans (strain ATCC 13939 / DSM 20539 / JCM 16871 / CCUG 27074 / LMG 4051 / NBRC 15346 / NCIMB 9279 / VKM B-1422 / R1), this protein is Uracil-DNA glycosylase.